Consider the following 510-residue polypeptide: Serine/threonine protein phosphatase 2A 57 kDa regulatory subunit B' kappa isoform (510 aa).

The segment at 1–51 is disordered; that stretch reads MWKGFLSKLPRKTSASGRGADLDSGQCSNGAGNGNPIQRTSSCGSIPSGRS. A compositionally biased stretch (polar residues) spans 25–51; it reads GQCSNGAGNGNPIQRTSSCGSIPSGRS. 2 positions are modified to phosphothreonine: threonine 476 and threonine 493. Phosphoserine is present on serine 502. Residue threonine 508 is modified to Phosphothreonine.

This sequence belongs to the phosphatase 2A regulatory subunit B56 family. As to quaternary structure, PP2A consists of a common heteromeric enzyme, composed of a catalytic subunit (subunits C), a constant regulatory subunit (subunit A), and a variety of regulatory subunits such as subunits B (the R2/B/PR55/B55, R3/B''/PR72/PR130/PR59 and R5/B'/B56 families). Interacts with SIT1. Phosphorylated at Thr-476, Thr-493, Ser-502 and Thr-508 by SIT1. In terms of tissue distribution, expressed in root stele and epidermal cells.

The protein localises to the cytoplasm. The protein resides in the cytosol. It localises to the cell membrane. B regulatory subunit of phosphatase 2A (PP2A) involved in salt stress response. Under salt stress conditions, required for the catalytic activity of PP2A and the dephosphorylation of SIT1, a negative regulator of salt tolerance. Dephosphorylation of SIT1 turns off salt-induced SIT1 activity directly, which has a positive effect on salt tolerance. This is Serine/threonine protein phosphatase 2A 57 kDa regulatory subunit B' kappa isoform from Oryza sativa subsp. japonica (Rice).